Here is a 297-residue protein sequence, read N- to C-terminus: MSKIFVNPSAIRAGLADLEMAEETVDLIARNIEDNQAHLQGEPIEVDSLPEDMRRLQLDDTKPSGPGEIAATGESKCQEDFQMDEAEDPALLFQSYLDNVGIQIVRQMKSGERFLKIWSQTVEEIISYVTVNFPSLPGKSTEDKATQTASRELKKETVSAPSQRDSQSSKTKVAAQTASGPPALEWSTANEEDDPSVEAEIAHQIAESFSKKYKFPSRSSGIFLYNFEQLKMNLDDIVKESKNVPSVTRLAHDGSKLPLRCVLGWVALAKSKKFQLLVEPDKLNKIMQDDLNRYAFP.

The Nuclear export signal signature appears at 49–58 (LPEDMRRLQL). S64 carries the phosphoserine; by host modification. Residues 137 to 198 (PGKSTEDKAT…ANEEDDPSVE (62 aa)) form a disordered region. The segment at 138–172 (GKSTEDKATQTASRELKKETVSAPSQRDSQSSKTK) is DYNLL1 and DYNLL2 binding. A compositionally biased stretch (basic and acidic residues) spans 140–157 (STEDKATQTASRELKKET). A compositionally biased stretch (polar residues) spans 159 to 179 (SAPSQRDSQSSKTKVAAQTAS). A phosphoserine; by host PKC mark is found at S162 and S210. A Nuclear localization signal motif is present at residues 211–214 (KKYK). S271 carries the post-translational modification Phosphoserine; by host PKC.

This sequence belongs to the lyssavirus protein P family. As to quaternary structure, homotrimer when phosphorylated. This trimer is stabilized by binding to the L protein. Binds soluble protein N, and ribonucleocapsid. Interacts with host DYNLL1 and DYNLL2; this interaction may play a role in intracellular microtubule-dependent virus transport of incoming virus. Interacts with host STAT1, STAT2 and PML. Interacts with host TBK1. In terms of assembly, binds host PML. Post-translationally, phosphorylated by host PKC and by an unknown kinase.

It is found in the virion. The protein resides in the host cytoplasm. The protein localises to the host nucleus. Its function is as follows. Non catalytic polymerase cofactor and regulatory protein that plays a role in viral transcription and replication. Stabilizes the RNA polymerase L to the N-RNA template and binds the soluble protein N, preventing it from encapsidating non-genomic RNA. Also inhibits host IFN-alpha and IFN-beta signaling by binding and retaining phosphorylated STAT1 in the cytoplasm or by inhibiting the DNA binding of STAT1 in the nucleus. Might be involved, through interaction with host dynein, in intracellular microtubule-dependent virus transport of incoming virus from the synapse toward the cell body. Inhibits interferon induction pathways by interacting with host TBK1 and preventing the formation of dynamic cytoplasmic condensates that have liquid properties and that are essential for interferon production. The sequence is that of Phosphoprotein (P) from Homo sapiens (Human).